A 25-amino-acid chain; its full sequence is Mu-conotoxin CnIIIB (25 aa).

The residue at position 1 (Q1) is a Pyrrolidone carboxylic acid; partial. Disulfide bonds link C3–C15, C4–C21, and C10–C22.

This sequence belongs to the conotoxin M superfamily. Expressed by the venom duct.

It is found in the secreted. Functionally, mu-conotoxins block voltage-gated sodium channels (Nav). This synthetic toxin blocks slightly but irreversibly tetrodotoxin-resistant VGSCs. The sequence is that of Mu-conotoxin CnIIIB from Conus consors (Singed cone).